The chain runs to 1079 residues: Electrogenic sodium bicarbonate cotransporter 1 (1079 aa).

Positions 1–62 (MEDEAVLDRG…EKKEKERISE (62 aa)) are required for interaction with AHCYL1. At 1–466 (MEDEAVLDRG…FASDFYDALN (466 aa)) the chain is on the cytoplasmic side. E2 is modified (phosphoserine). Y30 carries the phosphotyrosine modification. Residues 39–52 (YRRRRRHKRKAGHK) are compositionally biased toward basic residues. A disordered region spans residues 39–78 (YRRRRRHKRKAGHKEKKEKERISENYSDKSDVENADESSS). Residues 53–70 (EKKEKERISENYSDKSDV) show a composition bias toward basic and acidic residues. A phosphoserine mark is found at S61, S65, S68, S223, S232, S233, and S245. Residues 235 to 266 (SRMFSNPDNGSPAMTHRNLTSSSLNDISDKPE) form a disordered region. Residues T249 and T254 each carry the phosphothreonine modification. Over residues 251-260 (RNLTSSSLND) the composition is skewed to polar residues. 3 positions are modified to phosphoserine: S256, S257, and S262. A helical transmembrane segment spans residues 467-491 (IQALSAILFIYLATVTNAITFGGLL). Over 492-501 (GDATDNMQGV) the chain is Extracellular. The chain crosses the membrane as a helical span at residues 502–520 (LESFLGTAVSGAIFCLFAG). A topological domain (cytoplasmic) is located at residue Q521. A discontinuously helical membrane pass occupies residues 522-542 (PLTILSSTGPVLVFERLLFNF). Topologically, residues 543–550 (SKDHSFDY) are extracellular. The helical transmembrane segment at 551–571 (LEFRLWIGLWSAFMCLILVAT) threads the bilayer. Residues 572–585 (DASFLVQYFTRFTE) lie on the Cytoplasmic side of the membrane. Residues 586–609 (EGFSSLISFIFIYDAFKKMIKLAD) form a helical membrane-spanning segment. N-linked (GlcNAc) asparagine glycosylation is found at I597 and F617. Residues 610 to 692 (YYPINSDFRV…GNNCDFVPDI (83 aa)) lie on the Extracellular side of the membrane. Residues 693-710 (TLMSFILFLGTYTSSMAM) form a helical membrane-spanning segment. Residues 711–725 (KKFKTSRYFPTTARK) are Cytoplasmic-facing. The helical transmembrane segment at 726–745 (LISDFAIILSILIFCVIDAL) threads the bilayer. The Extracellular portion of the chain corresponds to 746-779 (VGVDTPKLIVPSEFKPTSPHRGWFVPPFGGNPWW). An interaction with CA4 region spans residues 748–779 (VDTPKLIVPSEFKPTSPHRGWFVPPFGGNPWW). Residues 780–807 (VCLAAAIPALLVTILIFMDQQITAVIVN) form a helical membrane-spanning segment. The Cytoplasmic portion of the chain corresponds to 808–819 (RKEHKLKKGAGY). The chain crosses the membrane as a helical span at residues 820–836 (HLDLFWVAILMVVCSFM). Position 837 (A837) is a topological domain, extracellular. Residues 838–855 (LPWYVAATVISIAHIDSL) traverse the membrane as a discontinuously helical segment. The Cytoplasmic portion of the chain corresponds to 856 to 877 (KMETETSAPGEQPKFLGVREQR). A helical transmembrane segment spans residues 878-894 (VTGTLVFILTGLSVFMA). Residues 895-901 (PILKFIP) lie on the Extracellular side of the membrane. Residues 902-918 (MPVLYGVFLYMGVASLN) form a helical membrane-spanning segment. Residues 919 to 960 (GVQFMDRLKLLLMPLKHQPDFIYLRHVPLRRVHLFTSLQVLC) are Cytoplasmic-facing. An intramembrane region (discontinuously helical) is located at residues 961 to 986 (LALLWILKSTVAAIIFPVMILALVAV). Over 987 to 1079 (RKGMDYLFSQ…STFLERHTSC (93 aa)) the chain is Cytoplasmic. The interval 1002 to 1004 (LDD) is CA2-binding. Residues 1012 to 1079 (KKKEDEKKKK…STFLERHTSC (68 aa)) are disordered. 2 positions are modified to phosphoserine: S1026 and S1029. S1026 is subject to Phosphoserine; by PKA. The tract at residues 1030–1033 (DNDD) is CA2-binding. Phosphoserine occurs at positions 1034 and 1044. The interval 1057 to 1059 (FLS) is required for basolateral targeting. Residues D1060, L1064, S1069, and S1078 each carry the phosphoserine modification. Residues 1062-1079 (KPLDRERSSTFLERHTSC) show a composition bias toward basic and acidic residues.

This sequence belongs to the anion exchanger (TC 2.A.31) family. As to quaternary structure, homodimer. Interacts with CA2/carbonic anhydrase 2 and CA4/carbonic anhydrase 4 which may regulate transporter activity. Isoform 1 but not isoform 2 interacts with AHCYL1 (via PEST domain when phosphorylated); the interaction increases SLC4A4 isoform 1 activity. Interacts with AHCYL2. Phosphorylation of Ser-1026 by PKA increases the binding of CA2 and changes the Na(+):HCO3(-) stoichiometry of the transporter from 3:1 to 2:1. Phosphorylated in presence of STK39 and dephosphorylated in presence of PP1 phosphatase; phosphorylation seems to inhibit SLC4A4 activity. Post-translationally, N-glycosylation is not necessary for the transporter basic functions. As to expression, specifically expressed in kidney and to a lower extent in liver, lung, spleen, brain, skeletal muscle and heart. In kidney, expressed in proximal tubules at the corticomedullary junction. Isoform 2 is specifically expressed in kidney. Isoform 1 is expressed in kidney and pancreas while isoform 3 is specifically expressed in brain (at protein level). In brain, isoform 1 is expressed in astrocytes while isoform 3 is expressed in neurons (at protein level). In the eye, isoform 1 is expressed in cornea, conjunctiva, lens epithelium, ciliary bodies and retina while isoform 2 is detected only in the conjunctiva.

Its subcellular location is the basolateral cell membrane. It localises to the cell membrane. It catalyses the reaction 2 hydrogencarbonate(out) + Na(+)(out) = 2 hydrogencarbonate(in) + Na(+)(in). The enzyme catalyses 3 hydrogencarbonate(out) + Na(+)(out) = 3 hydrogencarbonate(in) + Na(+)(in). Inhibited by 4,4'-diisothiocyanatostilbene-2,2'-disulfonic acid (DIDS). In terms of biological role, electrogenic sodium/bicarbonate cotransporter with a Na(+):HCO3(-) stoichiometry varying from 1:2 to 1:3. May regulate bicarbonate influx/efflux at the basolateral membrane of cells and regulate intracellular pH. The sequence is that of Electrogenic sodium bicarbonate cotransporter 1 (Slc4a4) from Rattus norvegicus (Rat).